The sequence spans 780 residues: Aconitate hydratase, mitochondrial (780 aa).

The N-terminal 27 residues, 1–27 (MAPYSLLVTRLQKALGVRQYHVASVLC), are a transit peptide targeting the mitochondrion. An N6-succinyllysine modification is found at Lys-31. Position 50 is an N6-acetyllysine; alternate (Lys-50). Residue Lys-50 is modified to N6-succinyllysine; alternate. Residue Gln-99 participates in substrate binding. Lys-138 and Lys-144 each carry N6-acetyllysine; alternate. An N6-succinyllysine; alternate mark is found at Lys-138 and Lys-144. 192–194 (DSH) contacts substrate. An N6-acetyllysine; alternate modification is found at Lys-233. Lys-233 carries the post-translational modification N6-succinyllysine; alternate. Residue Cys-385 coordinates [4Fe-4S] cluster. Position 411 is an N6-succinyllysine (Lys-411). Residues Cys-448 and Cys-451 each contribute to the [4Fe-4S] cluster site. Residues Arg-474 and Arg-479 each contribute to the substrate site. 2 positions are modified to N6-acetyllysine; alternate: Lys-517 and Lys-523. Residues Lys-517 and Lys-523 each carry the N6-succinyllysine; alternate modification. Residues 524–537 (LEAPDADELPRSDF) show a composition bias toward basic and acidic residues. A disordered region spans residues 524-560 (LEAPDADELPRSDFDPGQDTYQHPPKDSSGQRVDVSP). Lys-549 is subject to N6-succinyllysine. Over residues 551-560 (SSGQRVDVSP) the composition is skewed to polar residues. A Phosphoserine modification is found at Ser-559. At Lys-573 the chain carries N6-acetyllysine; alternate. Lys-573 carries the N6-succinyllysine; alternate modification. Lys-577 and Lys-591 each carry N6-succinyllysine. The residue at position 605 (Lys-605) is an N6-acetyllysine; alternate. Lys-605 carries the post-translational modification N6-succinyllysine; alternate. Arg-607 is a substrate binding site. Lys-628 carries the post-translational modification N6-succinyllysine. Ser-670 bears the Phosphoserine mark. A substrate-binding site is contributed by 670-671 (SR). Lys-689 is subject to N6-succinyllysine. An N6-acetyllysine; alternate mark is found at Lys-723 and Lys-730. An N6-succinyllysine; alternate mark is found at Lys-723 and Lys-730. Residues Lys-736, Lys-739, and Lys-743 each carry the N6-acetyllysine modification.

Belongs to the aconitase/IPM isomerase family. In terms of assembly, monomer. Requires [4Fe-4S] cluster as cofactor. Post-translationally, forms covalent cross-links mediated by transglutaminase TGM2, between a glutamine and the epsilon-amino group of a lysine residue, forming homopolymers and heteropolymers.

The protein resides in the mitochondrion. It carries out the reaction citrate = D-threo-isocitrate. Its pathway is carbohydrate metabolism; tricarboxylic acid cycle; isocitrate from oxaloacetate: step 2/2. Functionally, catalyzes the isomerization of citrate to isocitrate via cis-aconitate. This chain is Aconitate hydratase, mitochondrial (Aco2), found in Mus musculus (Mouse).